Consider the following 807-residue polypeptide: Mechanosensitive cation channel TMEM63A (807 aa).

Residues 1 to 51 (MMDSPFLELWQSKAVSIREQLGLGDRPNDSYCYNSAKNSTVLQGVTFGGIP) lie on the Extracellular side of the membrane. An N-linked (GlcNAc...) asparagine glycan is attached at Asn-38. A helical membrane pass occupies residues 52 to 74 (TVLLIDVSCFLFLILVFSIIRRR). The Cytoplasmic segment spans residues 75 to 134 (FWDYGRIALVSEADSESRFQRLSSTSSSGQQDFENELGCCPWLTAIFRLHDDQILEWCGE). The helical transmembrane segment at 135 to 167 (DAIHYLSFQRHIIFLLVVVSFLSLCVILPVNLS) threads the bilayer. The Extracellular portion of the chain corresponds to 168–191 (GDLLDKDPYSFGRTTIANLQTDND). Residues 192–217 (LLWLHTIFAVIYLFLTVGFMRHHTQS) traverse the membrane as a helical segment. Over 218 to 416 (IKYKEENLVR…CWKNLSIQGL (199 aa)) the chain is Cytoplasmic. The tract at residues 219–414 (KYKEENLVRR…DICWKNLSIQ (196 aa)) is intracellular linker IL2; confers mechanosensitivity. The chain crosses the membrane as a helical span at residues 417-444 (RWWLQWLGINFTLFLGLFFLTTPSIILS). The Extracellular segment spans residues 445–462 (TMDKFNVTKPIHALNNPI). A glycan (N-linked (GlcNAc...) asparagine) is linked at Asn-450. Residues 463–490 (ISQFFPTLLLWSFSALLPSIVYYSTLLE) traverse the membrane as a helical segment. Topologically, residues 491–495 (SHWTK) are cytoplasmic. The chain crosses the membrane as a helical span at residues 496–532 (SGENQIMMTKVYIFLIFMVLILPSLGLTSLDFFFRWL). Residues 533–554 (FDKTSSEASIRLECVFLPDQGA) lie on the Extracellular side of the membrane. The chain crosses the membrane as a helical span at residues 555–586 (FFVNYVIASAFIGNGMELLRLPGLILYTFRMI). The tract at residues 555–586 (FFVNYVIASAFIGNGMELLRLPGLILYTFRMI) is gating helix. The Cytoplasmic portion of the chain corresponds to 587-606 (MAKTAADRRNVKQNQAFQYE). A helical membrane pass occupies residues 607-624 (FGAMYAWMLCVFTVIVAY). Topologically, residues 625-628 (SITC) are extracellular. The helical transmembrane segment at 629–651 (PIIAPFGLIYILLKHMVDRHNLY) threads the bilayer. Residues 652–661 (FVYLPAKLEK) are Cytoplasmic-facing. The chain crosses the membrane as a helical span at residues 662–689 (GIHFAAVNQALAAPILCLFWLYFFSFLR). The Extracellular portion of the chain corresponds to 690–694 (LGMKA). Residues 695–709 (PATLFTFLVLLLTIL) form a helical membrane-spanning segment. The Cytoplasmic portion of the chain corresponds to 710-807 (VCLAHTCFGC…GSVAAAPQEA (98 aa)). A Phosphoserine modification is found at Ser-739.

Belongs to the CSC1 (TC 1.A.17) family. As to quaternary structure, monomer. N-Glycosylated.

The protein resides in the lysosome membrane. Its subcellular location is the early endosome membrane. It localises to the cell membrane. The enzyme catalyses Ca(2+)(in) = Ca(2+)(out). Mechanosensitive cation channel with low conductance and high activation threshold. In contrast to TMEM63B, does not show phospholipid scramblase activity. Acts as a regulator of lysosomal morphology by mediating lysosomal mechanosensitivity. Important for the baby's first breath and respiration throughout life. Upon lung inflation conducts cation currents in alveolar type 1 and 2 cells triggering lamellar body exocytosis and surfactant secretion into airspace. Also acts as an osmosensitive cation channel preferentially activated by hypotonic stress. The protein is Mechanosensitive cation channel TMEM63A of Homo sapiens (Human).